The chain runs to 127 residues: Large ribosomal subunit protein uL22 (127 aa).

It belongs to the universal ribosomal protein uL22 family. In terms of assembly, part of the 50S ribosomal subunit.

In terms of biological role, this protein binds specifically to 23S rRNA; its binding is stimulated by other ribosomal proteins, e.g. L4, L17, and L20. It is important during the early stages of 50S assembly. It makes multiple contacts with different domains of the 23S rRNA in the assembled 50S subunit and ribosome. The globular domain of the protein is located near the polypeptide exit tunnel on the outside of the subunit, while an extended beta-hairpin is found that lines the wall of the exit tunnel in the center of the 70S ribosome. The polypeptide is Large ribosomal subunit protein uL22 (Rhizorhabdus wittichii (strain DSM 6014 / CCUG 31198 / JCM 15750 / NBRC 105917 / EY 4224 / RW1) (Sphingomonas wittichii)).